The chain runs to 369 residues: Saccharopine dehydrogenase [NAD(+), L-lysine-forming] (369 aa).

L-saccharopine is bound by residues Arg-19 and Lys-78. Lys-78 serves as the catalytic Proton acceptor. His-96 acts as the Proton donor in catalysis. An L-saccharopine-binding site is contributed by Gln-101. Arg-130 contributes to the NAD(+) binding site. L-saccharopine contacts are provided by Arg-131 and Phe-135. Residues 203–204 (GR), Asp-227, Thr-231, Tyr-251, and Val-278 each bind NAD(+). Cys-205 and Cys-249 form a disulfide bridge. Position 279–281 (279–281 (SAD)) interacts with L-saccharopine. 318-321 (IDHL) serves as a coordination point for NAD(+).

It belongs to the AlaDH/PNT family. Monomer.

It carries out the reaction L-saccharopine + NAD(+) + H2O = L-lysine + 2-oxoglutarate + NADH + H(+). It functions in the pathway amino-acid biosynthesis; L-lysine biosynthesis via AAA pathway; L-lysine from L-alpha-aminoadipate (fungal route): step 3/3. Catalyzes the NAD(+)-dependent cleavage of saccharopine to L-lysine and 2-oxoglutarate, the final step in the alpha-aminoadipate (AAA) pathway for lysin biosynthesis. In Yarrowia lipolytica (strain CLIB 122 / E 150) (Yeast), this protein is Saccharopine dehydrogenase [NAD(+), L-lysine-forming].